The chain runs to 232 residues: LexA repressor (232 aa).

The span at 1–10 (MDDSNDSSSA) shows a compositional bias: polar residues. Residues 1 to 22 (MDDSNDSSSAGPDGRLHAVDPS) form a disordered region. The H-T-H motif DNA-binding region spans 47–67 (IREIGDAVGLTSTSSVAHQLR). Active-site for autocatalytic cleavage activity residues include S156 and K193.

Belongs to the peptidase S24 family. Homodimer.

It catalyses the reaction Hydrolysis of Ala-|-Gly bond in repressor LexA.. Represses a number of genes involved in the response to DNA damage (SOS response), including recA and lexA. In the presence of single-stranded DNA, RecA interacts with LexA causing an autocatalytic cleavage which disrupts the DNA-binding part of LexA, leading to derepression of the SOS regulon and eventually DNA repair. This Mycolicibacterium paratuberculosis (strain ATCC BAA-968 / K-10) (Mycobacterium paratuberculosis) protein is LexA repressor.